Reading from the N-terminus, the 64-residue chain is Protein translocase subunit SecE (64 aa).

A helical transmembrane segment spans residues 35 to 55 (LVVLGTVAFITVFFAVVDYGI).

Belongs to the SecE/SEC61-gamma family. As to quaternary structure, component of the Sec protein translocase complex. Heterotrimer consisting of SecY, SecE and SecG subunits. The heterotrimers can form oligomers, although 1 heterotrimer is thought to be able to translocate proteins. Interacts with the ribosome. Interacts with SecDF, and other proteins may be involved. Interacts with SecA.

It localises to the cell membrane. Essential subunit of the Sec protein translocation channel SecYEG. Clamps together the 2 halves of SecY. May contact the channel plug during translocation. The sequence is that of Protein translocase subunit SecE from Halalkalibacterium halodurans (strain ATCC BAA-125 / DSM 18197 / FERM 7344 / JCM 9153 / C-125) (Bacillus halodurans).